Here is a 395-residue protein sequence, read N- to C-terminus: Acid ceramidase (395 aa).

The signal sequence occupies residues 1 to 21; sequence MLGRSRLTFVLLAAAVTCAEA. Cys31 and Cys340 are disulfide-bonded. Cys143 (nucleophile) is an active-site residue. Asn173, Asn259, Asn286, and Asn348 each carry an N-linked (GlcNAc...) asparagine glycan. A disulfide bridge connects residues Cys388 and Cys392.

This sequence belongs to the acid ceramidase family. As to quaternary structure, heterodimer; disulfide-linked. The heterodimer is composed of the disulfide-linked alpha and beta chains produced by autocatalytic cleavage of the precursor. In terms of processing, N-glycosylated. Post-translationally, proteolytically cleaved into two chains alpha and beta that remain associated via a disulfide bond. Cleavage gives rise to a conformation change that activates the enzyme. The same catalytic Cys residue mediates the autoproteolytic cleavage and subsequent hydrolysis of lipid substrates. The beta chain may undergo an additional C-terminal processing.

It is found in the lysosome. It localises to the secreted. The catalysed reaction is an N-acylsphing-4-enine + H2O = sphing-4-enine + a fatty acid. It catalyses the reaction N-dodecanoylsphing-4-enine + H2O = dodecanoate + sphing-4-enine. It carries out the reaction N-tetradecanoylsphing-4-enine + H2O = tetradecanoate + sphing-4-enine. The enzyme catalyses N-hexadecanoylsphing-4-enine + H2O = sphing-4-enine + hexadecanoate. The catalysed reaction is N-octadecanoylsphing-4-enine + H2O = sphing-4-enine + octadecanoate. It catalyses the reaction N-dodecanoyl-(4R)-hydroxysphinganine + H2O = (4R)-hydroxysphinganine + dodecanoate. It carries out the reaction N-(dodecanoyl)-sphinganine + H2O = dodecanoate + sphinganine. The enzyme catalyses N-(acetyl)-sphing-4-enine + H2O = sphing-4-enine + acetate. The catalysed reaction is N-(hexanoyl)sphing-4-enine + H2O = hexanoate + sphing-4-enine. It catalyses the reaction N-octanoylsphing-4-enine + H2O = octanoate + sphing-4-enine. It carries out the reaction N-(9Z-octadecenoyl)-sphing-4-enine + H2O = sphing-4-enine + (9Z)-octadecenoate. The enzyme catalyses N-dodecanoylethanolamine + H2O = dodecanoate + ethanolamine. Its pathway is lipid metabolism; sphingolipid metabolism. Lysosomal ceramidase that hydrolyzes sphingolipid ceramides into sphingosine and free fatty acids at acidic pH. Ceramides, sphingosine, and its phosphorylated form sphingosine-1-phosphate are bioactive lipids that mediate cellular signaling pathways regulating several biological processes including cell proliferation, apoptosis and differentiation. Has a higher catalytic efficiency towards C12-ceramides versus other ceramides. Also catalyzes the reverse reaction allowing the synthesis of ceramides from fatty acids and sphingosine. For the reverse synthetic reaction, the natural sphingosine D-erythro isomer is more efficiently utilized as a substrate compared to D-erythro-dihydrosphingosine and D-erythro-phytosphingosine, while the fatty acids with chain lengths of 12 or 14 carbons are the most efficiently used. Also has an N-acylethanolamine hydrolase activity. By regulating the levels of ceramides, sphingosine and sphingosine-1-phosphate in the epidermis, mediates the calcium-induced differentiation of epidermal keratinocytes. Also indirectly regulates tumor necrosis factor/TNF-induced apoptosis. By regulating the intracellular balance between ceramides and sphingosine, in adrenocortical cells, probably also acts as a regulator of steroidogenesis. The sequence is that of Acid ceramidase from Heterocephalus glaber (Naked mole rat).